The primary structure comprises 502 residues: Cysteine--tRNA ligase (502 aa).

Residue cysteine 30 coordinates Zn(2+). The short motif at 32–42 (PTIYDYAHIGN) is the 'HIGH' region element. Zn(2+) is bound by residues cysteine 224, histidine 263, and glutamate 267. The short motif at 296–300 (KMSKS) is the 'KMSKS' region element. Lysine 299 contacts ATP.

This sequence belongs to the class-I aminoacyl-tRNA synthetase family. As to quaternary structure, monomer. Zn(2+) is required as a cofactor.

It is found in the cytoplasm. It carries out the reaction tRNA(Cys) + L-cysteine + ATP = L-cysteinyl-tRNA(Cys) + AMP + diphosphate. This Bartonella quintana (strain Toulouse) (Rochalimaea quintana) protein is Cysteine--tRNA ligase.